The primary structure comprises 867 residues: Piwi-like protein 1 (867 aa).

Positions 1–11 (MTGRARARARG) are enriched in basic residues. The disordered stretch occupies residues 1–70 (MTGRARARAR…QRGPQDAPKT (70 aa)). Over residues 28–44 (AQKTLPSHPSEQRQSLQ) the composition is skewed to polar residues. Residues 286–397 (TVLDFMYSLY…LIPELCYLTG (112 aa)) form the PAZ domain. The required for binding 2'-O-methylated 3'-end of piRNAs stretch occupies residues 324–326 (TYR). The segment at 485–621 (SRETRVAPLI…LQMNCKMGGE (137 aa)) is MID region. The region spanning 561–853 (IVVCILSSTR…LAFLVGQSIH (293 aa)) is the Piwi domain. Active-site residues include D638, E676, D708, and H842.

It belongs to the argonaute family. Piwi subfamily. It depends on Mg(2+) as a cofactor. Post-translationally, methylated on arginine residues; required for the interaction with Tudor domain-containing protein and subsequent localization to the meiotic nuage, also named P granule.

The protein localises to the cytoplasm. Its function is as follows. Endoribonuclease that plays a central role in postnatal germ cells by repressing transposable elements and preventing their mobilization, which is essential for the germline integrity. Acts via the piRNA metabolic process, which mediates the repression of transposable elements during meiosis by forming complexes composed of piRNAs and Piwi proteins and govern the methylation and subsequent repression of transposons. Directly binds methylated piRNAs, a class of 24 to 30 nucleotide RNAs that are generated by a Dicer-independent mechanism and are primarily derived from transposons and other repeated sequence elements. Strongly prefers a uridine in the first position of their guide (g1U preference, also named 1U-bias). Besides their function in transposable elements repression, piRNAs are probably involved in other processes during meiosis such as translation regulation. Not involved in the piRNA amplification loop, also named ping-pong amplification cycle. Acts as an endoribonuclease that cleaves transposon messenger RNAs. The chain is Piwi-like protein 1 (PIWIL1) from Gallus gallus (Chicken).